The following is an 84-amino-acid chain: Cytochrome b559 subunit alpha (84 aa).

A helical membrane pass occupies residues 21 to 35; sequence VIHSITIPSLFIAGW. His23 lines the heme pocket.

It belongs to the PsbE/PsbF family. Heterodimer of an alpha subunit and a beta subunit. PSII is composed of 1 copy each of membrane proteins PsbA, PsbB, PsbC, PsbD, PsbE, PsbF, PsbH, PsbI, PsbJ, PsbK, PsbL, PsbM, PsbT, PsbX, PsbY, PsbZ, Psb30/Ycf12, at least 3 peripheral proteins of the oxygen-evolving complex and a large number of cofactors. It forms dimeric complexes. Heme b serves as cofactor.

The protein resides in the plastid membrane. Functionally, this b-type cytochrome is tightly associated with the reaction center of photosystem II (PSII). PSII is a light-driven water:plastoquinone oxidoreductase that uses light energy to abstract electrons from H(2)O, generating O(2) and a proton gradient subsequently used for ATP formation. It consists of a core antenna complex that captures photons, and an electron transfer chain that converts photonic excitation into a charge separation. The chain is Cytochrome b559 subunit alpha from Cuscuta gronovii (Common dodder).